We begin with the raw amino-acid sequence, 327 residues long: Aspartate--ammonia ligase (327 aa).

This sequence belongs to the class-II aminoacyl-tRNA synthetase family. AsnA subfamily.

Its subcellular location is the cytoplasm. The enzyme catalyses L-aspartate + NH4(+) + ATP = L-asparagine + AMP + diphosphate + H(+). Its pathway is amino-acid biosynthesis; L-asparagine biosynthesis; L-asparagine from L-aspartate (ammonia route): step 1/1. This chain is Aspartate--ammonia ligase, found in Bacillus cereus (strain ATCC 10987 / NRS 248).